Here is a 478-residue protein sequence, read N- to C-terminus: Quinoprotein glucose dehydrogenase B (478 aa).

The first 24 residues, 1–24 (MNKHLLAKIALLSAVQLVTLSAFA), serve as a signal peptide directing secretion. D-glucose-binding residues include glutamine 100 and aspartate 167. The active-site Proton acceptor is histidine 168. Residues glutamine 192 and arginine 252 each coordinate D-glucose. Residues 252-253 (RN) form a PQQ region. Residues glycine 271, proline 272, glutamate 277, tyrosine 287, alanine 293, tyrosine 295, aspartate 297, and glutamate 333 each coordinate Ca(2+). Pyrroloquinoline quinone contacts are provided by tyrosine 367, threonine 372, and lysine 401. The tract at residues 430-432 (RYR) is PQQ.

The protein belongs to the PQQ oxidoreductase GdhB family. In terms of assembly, homodimer. Pyrroloquinoline quinone is required as a cofactor. Ca(2+) serves as cofactor.

It carries out the reaction a ubiquinone + D-glucose = D-glucono-1,5-lactone + a ubiquinol. Its function is as follows. Oxidizes glucose to gluconolactone. This Acinetobacter calcoaceticus protein is Quinoprotein glucose dehydrogenase B (gdhB).